Reading from the N-terminus, the 148-residue chain is Cytochrome c oxidase subunit 6, mitochondrial (148 aa).

A mitochondrion-targeting transit peptide spans 1 to 40 (MASFFRTAVRGPSAGLFRAVARPQPIAARVSLFSTSSRFR).

Belongs to the cytochrome c oxidase subunit 5A family. As to quaternary structure, component of the cytochrome c oxidase (complex IV, CIV), a multisubunit enzyme composed of 11 subunits. The complex is composed of a catalytic core of 3 subunits Cox1, Cox2 and Cox3, encoded in the mitochondrial DNA, and 8 supernumerary subunits Cox4, Cox5a/Cox5, Cox6, Cox7, Cox8, Cox7a/Cox9, Cox6b/Cox12 and Cox6a/Cox13, which are encoded in the nuclear genome. The complex exists as a monomer or a dimer and forms respiratory supercomplexes (SCs) in the inner mitochondrial membrane with NADH-ubiquinone oxidoreductase (complex I, CI) and ubiquinol-cytochrome c oxidoreductase (cytochrome b-c1 complex, complex III, CIII), resulting in various different assemblies (supercomplexes I(1)IV(1), I(1)III(3)IV(2), III(2)IV(1) and III(2)IV(2) as well as larger supercomplexes of compositions like I(1)III(2)IV(5-6)).

Its subcellular location is the mitochondrion inner membrane. Its pathway is energy metabolism; oxidative phosphorylation. Its function is as follows. Component of the cytochrome c oxidase, the last enzyme in the mitochondrial electron transport chain which drives oxidative phosphorylation. The respiratory chain contains 3 multisubunit complexes succinate dehydrogenase (complex II, CII), ubiquinol-cytochrome c oxidoreductase (cytochrome b-c1 complex, complex III, CIII) and cytochrome c oxidase (complex IV, CIV), that cooperate to transfer electrons derived from NADH and succinate to molecular oxygen, creating an electrochemical gradient over the inner membrane that drives transmembrane transport and the ATP synthase. Cytochrome c oxidase is the component of the respiratory chain that catalyzes the reduction of oxygen to water. Electrons originating from reduced cytochrome c in the intermembrane space (IMS) are transferred via the dinuclear copper A center (CU(A)) of Cox2 and heme A of Cox1 to the active site in Cox1, a binuclear center (BNC) formed by heme A3 and copper B (CU(B)). The BNC reduces molecular oxygen to 2 water molecules using 4 electrons from cytochrome c in the IMS and 4 protons from the mitochondrial matrix. The polypeptide is Cytochrome c oxidase subunit 6, mitochondrial (cox-6) (Neurospora crassa (strain ATCC 24698 / 74-OR23-1A / CBS 708.71 / DSM 1257 / FGSC 987)).